A 117-amino-acid chain; its full sequence is UPF0344 protein GWCH70_0687 (117 aa).

4 helical membrane-spanning segments follow: residues 2 to 22, 32 to 52, 55 to 75, and 97 to 117; these read THAHITSWLITVILFFIAVSL, IVQMALRLFYIFTVITGGLLL, IASISILYIIKAIVGLWLIGA, and IVAFVLVLFLGFMLPLGFDLF.

The protein belongs to the UPF0344 family.

The protein resides in the cell membrane. The protein is UPF0344 protein GWCH70_0687 of Geobacillus sp. (strain WCH70).